We begin with the raw amino-acid sequence, 446 residues long: tRNA-2-methylthio-N(6)-dimethylallyladenosine synthase (446 aa).

The MTTase N-terminal domain maps to 3-120 (KKIYIKTFGC…LPEMLKQRRS (118 aa)). [4Fe-4S] cluster is bound by residues Cys12, Cys49, Cys83, Cys157, Cys161, and Cys164. Residues 143–375 (KVEGATAFVS…QAVIDQNTRR (233 aa)) enclose the Radical SAM core domain. One can recognise a TRAM domain in the interval 378–444 (DEMVGTVQRI…AYTLRGEIIV (67 aa)).

This sequence belongs to the methylthiotransferase family. MiaB subfamily. Monomer. [4Fe-4S] cluster serves as cofactor.

The protein resides in the cytoplasm. It carries out the reaction N(6)-dimethylallyladenosine(37) in tRNA + (sulfur carrier)-SH + AH2 + 2 S-adenosyl-L-methionine = 2-methylsulfanyl-N(6)-dimethylallyladenosine(37) in tRNA + (sulfur carrier)-H + 5'-deoxyadenosine + L-methionine + A + S-adenosyl-L-homocysteine + 2 H(+). Catalyzes the methylthiolation of N6-(dimethylallyl)adenosine (i(6)A), leading to the formation of 2-methylthio-N6-(dimethylallyl)adenosine (ms(2)i(6)A) at position 37 in tRNAs that read codons beginning with uridine. The protein is tRNA-2-methylthio-N(6)-dimethylallyladenosine synthase of Janthinobacterium sp. (strain Marseille) (Minibacterium massiliensis).